Consider the following 148-residue polypeptide: Arginine repressor (148 aa).

Belongs to the ArgR family.

It is found in the cytoplasm. It functions in the pathway amino-acid biosynthesis; L-arginine biosynthesis [regulation]. Functionally, regulates arginine biosynthesis genes. This chain is Arginine repressor, found in Acidobacterium capsulatum (strain ATCC 51196 / DSM 11244 / BCRC 80197 / JCM 7670 / NBRC 15755 / NCIMB 13165 / 161).